Reading from the N-terminus, the 283-residue chain is Thymidylate synthase (283 aa).

R22 provides a ligand contact to dUMP. C160 (nucleophile) is an active-site residue. DUMP contacts are provided by residues 180–183 (RSCD), N191, and 221–223 (HIY). (6R)-5,10-methylene-5,6,7,8-tetrahydrofolate is bound at residue D183. Position 282 (S282) interacts with (6R)-5,10-methylene-5,6,7,8-tetrahydrofolate.

The protein belongs to the thymidylate synthase family. Bacterial-type ThyA subfamily. In terms of assembly, homodimer.

The protein localises to the cytoplasm. It carries out the reaction dUMP + (6R)-5,10-methylene-5,6,7,8-tetrahydrofolate = 7,8-dihydrofolate + dTMP. Its pathway is pyrimidine metabolism; dTTP biosynthesis. Its function is as follows. Catalyzes the reductive methylation of 2'-deoxyuridine-5'-monophosphate (dUMP) to 2'-deoxythymidine-5'-monophosphate (dTMP) while utilizing 5,10-methylenetetrahydrofolate (mTHF) as the methyl donor and reductant in the reaction, yielding dihydrofolate (DHF) as a by-product. This enzymatic reaction provides an intracellular de novo source of dTMP, an essential precursor for DNA biosynthesis. This Haemophilus influenzae (strain PittEE) protein is Thymidylate synthase.